The sequence spans 392 residues: Spermatogenesis associated 6-like protein (392 aa).

Phosphoserine is present on residues S260 and S263. The span at 286 to 301 (SCLDSSQFGKSSSSKQ) shows a compositional bias: low complexity. A disordered region spans residues 286 to 305 (SCLDSSQFGKSSSSKQGDAD).

This sequence belongs to the SPATA6 family.

This is Spermatogenesis associated 6-like protein (SPATA6L) from Homo sapiens (Human).